Consider the following 119-residue polypeptide: uncharacterized protein (119 aa).

A helical transmembrane segment spans residues 74-91 (LSVHFLLNVISAILSMLI).

The protein resides in the membrane. This is an uncharacterized protein from Schizosaccharomyces pombe (strain 972 / ATCC 24843) (Fission yeast).